The following is a 265-amino-acid chain: Small ribosomal subunit protein eS4 (265 aa).

An S4 RNA-binding domain is found at 42-104; sequence LPLILIIRNR…TNENYRLLYD (63 aa).

It belongs to the eukaryotic ribosomal protein eS4 family.

It is found in the cytoplasm. In Zea mays (Maize), this protein is Small ribosomal subunit protein eS4 (RPS4).